The primary structure comprises 493 residues: Protein nucleotidyltransferase YdiU (493 aa).

ATP is bound by residues Gly-96, Gly-98, Arg-99, Lys-119, Asp-131, Gly-132, Arg-182, and Arg-189. Catalysis depends on Asp-258, which acts as the Proton acceptor. Asn-259 and Asp-268 together coordinate Mg(2+). Asp-268 serves as a coordination point for ATP. Positions 471 to 493 (EKYTEFKNPPAPKERVSQTFCGT) are disordered.

Belongs to the SELO family. Mg(2+) is required as a cofactor. The cofactor is Mn(2+).

It catalyses the reaction L-seryl-[protein] + ATP = 3-O-(5'-adenylyl)-L-seryl-[protein] + diphosphate. The catalysed reaction is L-threonyl-[protein] + ATP = 3-O-(5'-adenylyl)-L-threonyl-[protein] + diphosphate. The enzyme catalyses L-tyrosyl-[protein] + ATP = O-(5'-adenylyl)-L-tyrosyl-[protein] + diphosphate. It carries out the reaction L-histidyl-[protein] + UTP = N(tele)-(5'-uridylyl)-L-histidyl-[protein] + diphosphate. It catalyses the reaction L-seryl-[protein] + UTP = O-(5'-uridylyl)-L-seryl-[protein] + diphosphate. The catalysed reaction is L-tyrosyl-[protein] + UTP = O-(5'-uridylyl)-L-tyrosyl-[protein] + diphosphate. Nucleotidyltransferase involved in the post-translational modification of proteins. It can catalyze the addition of adenosine monophosphate (AMP) or uridine monophosphate (UMP) to a protein, resulting in modifications known as AMPylation and UMPylation. In Nitrosococcus oceani (strain ATCC 19707 / BCRC 17464 / JCM 30415 / NCIMB 11848 / C-107), this protein is Protein nucleotidyltransferase YdiU.